A 106-amino-acid chain; its full sequence is Cell division protein FtsL (106 aa).

The Cytoplasmic segment spans residues 1-22; the sequence is MPRQSPPNLAKLIALDLLTVGR. A helical transmembrane segment spans residues 23–43; it reads VPLLLLVLIFSCAMGVVFMTH. Topologically, residues 44–106 are periplasmic; it reads HTRQAISAKD…SDKEVVINLK (63 aa).

This sequence belongs to the FtsL family. In terms of assembly, part of a complex composed of FtsB, FtsL and FtsQ.

The protein resides in the cell inner membrane. Essential cell division protein. May link together the upstream cell division proteins, which are predominantly cytoplasmic, with the downstream cell division proteins, which are predominantly periplasmic. This is Cell division protein FtsL from Vibrio cholerae serotype O1 (strain ATCC 39315 / El Tor Inaba N16961).